The sequence spans 42 residues: Photosystem I reaction center subunit IX (42 aa).

The helical transmembrane segment at 7 to 27 threads the bilayer; sequence YLSTAPVLATIWFIILAGLLI.

The protein belongs to the PsaJ family.

The protein localises to the plastid. It is found in the chloroplast thylakoid membrane. In terms of biological role, may help in the organization of the PsaE and PsaF subunits. In Mesostigma viride (Green alga), this protein is Photosystem I reaction center subunit IX.